The sequence spans 412 residues: Adherens junction-associated protein 1 (412 aa).

The first 43 residues, 1–43 (MWIQQLLGLSSMSIRWPGRSLGSHAWILIAMLQLAVDFPSCDS), serve as a signal peptide directing secretion. Topologically, residues 44-284 (LGPGPEFRLL…GETSGLAVHQ (241 aa)) are extracellular. Disordered stretches follow at residues 62–175 (LWSL…GRPT) and 243–271 (DPWK…IQPP). Over residues 121-146 (PPAATRSSPSLASATASSSIVTAGAA) the composition is skewed to low complexity. The segment covering 160-171 (HDTEFNDFDFRG) has biased composition (basic and acidic residues). Residues 248 to 263 (TPVGVSTTEPSTSPSS) are compositionally biased toward low complexity. The chain crosses the membrane as a helical span at residues 285-305 (IITITVSLIMVIAALITTLVL). The tract at residues 305–412 (LKNCCAPSGH…VSEKWFEISC (108 aa)) is targeting signals. Residues 306 to 412 (KNCCAPSGHT…VSEKWFEISC (107 aa)) are Cytoplasmic-facing.

In terms of assembly, forms a complex with CDH1 and CTNNB1; interacts directly with CTNNB1. Interacts with AP1M2 and isoform 2 of BSG/CD147.

It is found in the basolateral cell membrane. The protein localises to the apical cell membrane. It localises to the cell junction. The protein resides in the adherens junction. Functionally, plays a role in cell adhesion and cell migration. This Mus musculus (Mouse) protein is Adherens junction-associated protein 1 (Ajap1).